A 283-amino-acid polypeptide reads, in one-letter code: Elongation factor Ts (283 aa).

The interval 80–83 (TDFV) is involved in Mg(2+) ion dislocation from EF-Tu.

This sequence belongs to the EF-Ts family.

The protein localises to the cytoplasm. In terms of biological role, associates with the EF-Tu.GDP complex and induces the exchange of GDP to GTP. It remains bound to the aminoacyl-tRNA.EF-Tu.GTP complex up to the GTP hydrolysis stage on the ribosome. This Haemophilus influenzae (strain 86-028NP) protein is Elongation factor Ts.